The following is a 452-amino-acid chain: Pup--protein ligase (452 aa).

Position 9 (E9) interacts with Mg(2+). Position 53 (R53) interacts with ATP. Y55 serves as a coordination point for Mg(2+). D57 (proton acceptor) is an active-site residue. Residue E63 coordinates Mg(2+). Residues T66 and W419 each coordinate ATP.

This sequence belongs to the Pup ligase/Pup deamidase family. Pup-conjugating enzyme subfamily.

It catalyses the reaction ATP + [prokaryotic ubiquitin-like protein]-L-glutamate + [protein]-L-lysine = ADP + phosphate + N(6)-([prokaryotic ubiquitin-like protein]-gamma-L-glutamyl)-[protein]-L-lysine.. It functions in the pathway protein degradation; proteasomal Pup-dependent pathway. Its pathway is protein modification; protein pupylation. Catalyzes the covalent attachment of the prokaryotic ubiquitin-like protein modifier Pup to the proteasomal substrate proteins, thereby targeting them for proteasomal degradation. This tagging system is termed pupylation. The ligation reaction involves the side-chain carboxylate of the C-terminal glutamate of Pup and the side-chain amino group of a substrate lysine. The protein is Pup--protein ligase of Nakamurella multipartita (strain ATCC 700099 / DSM 44233 / CIP 104796 / JCM 9543 / NBRC 105858 / Y-104) (Microsphaera multipartita).